The primary structure comprises 101 residues: Small ribosomal subunit protein uS14 (101 aa).

Belongs to the universal ribosomal protein uS14 family. Part of the 30S ribosomal subunit. Contacts proteins S3 and S10.

Functionally, binds 16S rRNA, required for the assembly of 30S particles and may also be responsible for determining the conformation of the 16S rRNA at the A site. This chain is Small ribosomal subunit protein uS14, found in Pseudomonas syringae pv. syringae (strain B728a).